Here is a 122-residue protein sequence, read N- to C-terminus: Large ribosomal subunit protein uL14 (122 aa).

The protein belongs to the universal ribosomal protein uL14 family. Part of the 50S ribosomal subunit. Forms a cluster with proteins L3 and L19. In the 70S ribosome, L14 and L19 interact and together make contacts with the 16S rRNA in bridges B5 and B8.

Binds to 23S rRNA. Forms part of two intersubunit bridges in the 70S ribosome. The protein is Large ribosomal subunit protein uL14 of Petrotoga mobilis (strain DSM 10674 / SJ95).